We begin with the raw amino-acid sequence, 353 residues long: Melatonin receptor type 1A (353 aa).

The tract at residues 1–26 (MRANGSELNGTVLPRDPPAEGSPRRP) is disordered. Topologically, residues 1 to 32 (MRANGSELNGTVLPRDPPAEGSPRRPPWVTST) are extracellular. N-linked (GlcNAc...) asparagine glycans are attached at residues Asn-4 and Asn-9. The helical transmembrane segment at 33–53 (LATILIFTIVVDLLGNLLVIL) threads the bilayer. The Cytoplasmic segment spans residues 54–66 (SVYRNKKLRNAGN). Residues 67–87 (IFVVSLAIADLVVAIYPYPLV) form a helical membrane-spanning segment. Residues 88-105 (LTSVFHNGWNLGYLHCQI) are Extracellular-facing. Cysteines 103 and 180 form a disulfide. The chain crosses the membrane as a helical span at residues 106-126 (SGFLMGLSVIGSIFNITGIAI). Residues 127-145 (NRYCYICHSLKYDKLYSDK) lie on the Cytoplasmic side of the membrane. The chain crosses the membrane as a helical span at residues 146–166 (NSLCYVGLIWVLTVVAIVPNL). Residues 167–190 (FVGSLQYDPRIYSCTFAQSVSSAY) lie on the Extracellular side of the membrane. The chain crosses the membrane as a helical span at residues 191-211 (TIAVVFFHFILPIAIVTYCYL). Topologically, residues 212–243 (RIWILVIQVRRRVKPDNNPRLKPHDFRNFVTM) are cytoplasmic. The chain crosses the membrane as a helical span at residues 244 to 264 (FVVFVLFAVCWAPLNFIGLAV). At 265–277 (AVDPETIIPRIPE) the chain is on the extracellular side. The helical transmembrane segment at 278–298 (WLFVSSYYMAYFNSCLNAIIY) threads the bilayer. Over 299–353 (GLLNQNFRREYKKIVVSFCTAKAFFQDSSNDAADRIRSKPSPLITNNNQVKVDSV) the chain is Cytoplasmic.

The protein belongs to the G-protein coupled receptor 1 family. Expressed in optic tectum and retina, less in neostriatum, hypothalamus and thalamus.

The protein resides in the cell membrane. Its function is as follows. High affinity receptor for melatonin. The activity of this receptor is mediated by pertussis toxin sensitive G proteins that inhibits adenylate cyclase activity. This Gallus gallus (Chicken) protein is Melatonin receptor type 1A.